Here is a 364-residue protein sequence, read N- to C-terminus: Putative zinc metalloprotease all3971 (364 aa).

His-17 provides a ligand contact to Zn(2+). Residue Glu-18 is part of the active site. Residue His-21 coordinates Zn(2+). The next 3 membrane-spanning stretches (helical) occupy residues 92-114 (AIVISAGVIANLIFAYMLLLAQV), 281-303 (LFFFAALISINLAVINILPLPAL), and 329-346 (VMQTGLVLLLGLGIFLIV). Residues 103–188 (LIFAYMLLLA…KSIQLTVARG (86 aa)) form the PDZ domain.

This sequence belongs to the peptidase M50B family. Requires Zn(2+) as cofactor.

The protein resides in the cell inner membrane. This chain is Putative zinc metalloprotease all3971, found in Nostoc sp. (strain PCC 7120 / SAG 25.82 / UTEX 2576).